Here is a 289-residue protein sequence, read N- to C-terminus: Geranylgeranyl diphosphate synthase (289 aa).

Positions 43 and 73 each coordinate isopentenyl diphosphate. Residues D80 and D86 each coordinate Mg(2+). R91 serves as a coordination point for (2E,6E)-farnesyl diphosphate. R92 is an isopentenyl diphosphate binding site. (2E,6E)-farnesyl diphosphate is bound by residues K170, T171, and Q205.

This sequence belongs to the FPP/GGPP synthase family. It depends on Mg(2+) as a cofactor.

The enzyme catalyses isopentenyl diphosphate + (2E,6E)-farnesyl diphosphate = (2E,6E,10E)-geranylgeranyl diphosphate + diphosphate. Its pathway is isoprenoid biosynthesis; geranylgeranyl diphosphate biosynthesis; geranylgeranyl diphosphate from farnesyl diphosphate and isopentenyl diphosphate: step 1/1. Its function is as follows. Catalyzes the condensation of farnesyl diphosphate (FPP) and isopentenyl diphosphate (IPP) to yield geranylgeranyl diphosphate (GGPP) needed for biosynthesis of carotenoids and diterpenes. This is Geranylgeranyl diphosphate synthase (crtE) from Rhodobacter capsulatus (strain ATCC BAA-309 / NBRC 16581 / SB1003).